A 474-amino-acid chain; its full sequence is Bifunctional protein GlmU (474 aa).

Residues 1–232 (MSALDVIIMA…ALQVAGVNSP (232 aa)) are pyrophosphorylase. UDP-N-acetyl-alpha-D-glucosamine contacts are provided by residues Lys-23, Gln-78, 83–84 (GT), 105–107 (SGD), Gly-142, Glu-157, and Asn-230. Mg(2+) is bound at residue Asp-107. Residue Asn-230 coordinates Mg(2+). A linker region spans residues 233–253 (LQLAELERAHQLAQARALMEQ). Residues 254–474 (GVRLADPARF…WQRPAKLPKA (221 aa)) form an N-acetyltransferase region. Residues Arg-349 and Lys-367 each contribute to the UDP-N-acetyl-alpha-D-glucosamine site. The active-site Proton acceptor is the His-379. The UDP-N-acetyl-alpha-D-glucosamine site is built by Tyr-382 and Asn-393. Acetyl-CoA contacts are provided by residues Ala-396, 402 to 403 (NY), Ser-421, Gly-439, and Arg-456. The interval 454–474 (VARGKQVTKENWQRPAKLPKA) is disordered.

This sequence in the N-terminal section; belongs to the N-acetylglucosamine-1-phosphate uridyltransferase family. In the C-terminal section; belongs to the transferase hexapeptide repeat family. Homotrimer. The cofactor is Mg(2+).

The protein resides in the cytoplasm. The catalysed reaction is alpha-D-glucosamine 1-phosphate + acetyl-CoA = N-acetyl-alpha-D-glucosamine 1-phosphate + CoA + H(+). It carries out the reaction N-acetyl-alpha-D-glucosamine 1-phosphate + UTP + H(+) = UDP-N-acetyl-alpha-D-glucosamine + diphosphate. It functions in the pathway nucleotide-sugar biosynthesis; UDP-N-acetyl-alpha-D-glucosamine biosynthesis; N-acetyl-alpha-D-glucosamine 1-phosphate from alpha-D-glucosamine 6-phosphate (route II): step 2/2. The protein operates within nucleotide-sugar biosynthesis; UDP-N-acetyl-alpha-D-glucosamine biosynthesis; UDP-N-acetyl-alpha-D-glucosamine from N-acetyl-alpha-D-glucosamine 1-phosphate: step 1/1. It participates in bacterial outer membrane biogenesis; LPS lipid A biosynthesis. Catalyzes the last two sequential reactions in the de novo biosynthetic pathway for UDP-N-acetylglucosamine (UDP-GlcNAc). The C-terminal domain catalyzes the transfer of acetyl group from acetyl coenzyme A to glucosamine-1-phosphate (GlcN-1-P) to produce N-acetylglucosamine-1-phosphate (GlcNAc-1-P), which is converted into UDP-GlcNAc by the transfer of uridine 5-monophosphate (from uridine 5-triphosphate), a reaction catalyzed by the N-terminal domain. In Paracidovorax citrulli (strain AAC00-1) (Acidovorax citrulli), this protein is Bifunctional protein GlmU.